The primary structure comprises 313 residues: MRNWSFSKAALTVSLLALSWSPFGPAEVQAYPIYAQENYAYPREATGRIVCANCHLAQKPVDIEVPQAVLPDTVFEATVKIPYDTEAKQVLGTGKKGPLNVGAVLILPEGFQIAPTDRIPEEMQTKVGKLYFQQYSPEHPNVIVVGPLPGKKYNEMVFPILAPNPATNKDVHFLKYPIYLGGNRGRGQVYPDGSKSNNNIFQAPVAGTITSITPGEKLTRVTLKTVAGTEVVESIPAGPDIIVSVGQTVKADQPLTNNPNVGGFGQAETEVVLQNPARVQGLIIFFAFVLIAQVFLVLKKKQFEKVQLSEMNF.

The N-terminal stretch at 1-30 (MRNWSFSKAALTVSLLALSWSPFGPAEVQA) is a signal peptide. Y31, C51, C54, and H55 together coordinate heme. A helical transmembrane segment spans residues 279–298 (VQGLIIFFAFVLIAQVFLVL).

This sequence belongs to the cytochrome f family. In terms of assembly, the 4 large subunits of the cytochrome b6-f complex are cytochrome b6, subunit IV (17 kDa polypeptide, petD), cytochrome f and the Rieske protein, while the 4 small subunits are PetG, PetL, PetM and PetN. The complex functions as a dimer. Requires heme as cofactor.

The protein resides in the plastid. It localises to the chloroplast thylakoid membrane. Component of the cytochrome b6-f complex, which mediates electron transfer between photosystem II (PSII) and photosystem I (PSI), cyclic electron flow around PSI, and state transitions. The polypeptide is Cytochrome f (Nephroselmis olivacea (Green alga)).